The chain runs to 717 residues: Translation initiation factor eIF2B subunit epsilon (717 aa).

A compositionally biased stretch (low complexity) spans Met1–Arg14. Positions Met1–Pro37 are disordered. An Omega-N-methylarginine modification is found at Arg18. The segment covering Arg18–Gln29 has biased composition (gly residues). Ser23 is modified (phosphoserine). Residues Lys57 and Lys99 each participate in a glycyl lysine isopeptide (Lys-Gly) (interchain with G-Cter in ubiquitin) cross-link. Ser126 carries the phosphoserine modification. Glycyl lysine isopeptide (Lys-Gly) (interchain with G-Cter in ubiquitin) cross-links involve residues Lys137 and Lys213. Position 318 is a phosphothreonine (Thr318). The tract at residues Gly442–Tyr479 is disordered. Ser446, Ser462, and Ser465 each carry phosphoserine. Over residues Ala452 to Ala467 the composition is skewed to acidic residues. Residue Lys501 forms a Glycyl lysine isopeptide (Lys-Gly) (interchain with G-Cter in ubiquitin) linkage. Residues Thr517–Ala538 are disordered. Positions Glu519–Glu533 are enriched in acidic residues. Phosphoserine occurs at positions 528 and 536. One can recognise a W2 domain in the interval Gly539 to Asp716. Ser540 carries the phosphoserine; by DYRK2 modification. At Ser713 the chain carries Phosphoserine.

Belongs to the eIF-2B gamma/epsilon subunits family. Component of the translation initiation factor 2B (eIF2B) complex which is a heterodecamer of two sets of five different subunits: alpha, beta, gamma, delta and epsilon. Subunits alpha, beta and delta comprise a regulatory subcomplex and subunits epsilon and gamma comprise a catalytic subcomplex. Within the complex, the hexameric regulatory complex resides at the center, with the two heterodimeric catalytic subcomplexes bound on opposite sides. Phosphorylated at Ser-540 by DYRK2; this is required for subsequent phosphorylation by GSK3B. Phosphorylated on serine and threonine residues by GSK3B; phosphorylation inhibits its function. In terms of processing, polyubiquitinated, probably by NEDD4.

Its subcellular location is the cytoplasm. It localises to the cytosol. With respect to regulation, activated by the chemical integrated stress response (ISR) inhibitor ISRIB which stimulates guanine nucleotide exchange factor activity for both phosphorylated and unphosphorylated eIF2. In terms of biological role, acts as a component of the translation initiation factor 2B (eIF2B) complex, which catalyzes the exchange of GDP for GTP on eukaryotic initiation factor 2 (eIF2) gamma subunit. Its guanine nucleotide exchange factor activity is repressed when bound to eIF2 complex phosphorylated on the alpha subunit, thereby limiting the amount of methionyl-initiator methionine tRNA available to the ribosome and consequently global translation is repressed. This Mus musculus (Mouse) protein is Translation initiation factor eIF2B subunit epsilon (Eif2b5).